Here is a 1176-residue protein sequence, read N- to C-terminus: Condensin complex subunit 1 (1176 aa).

Phosphoserine is present on residues Ser-464 and Ser-475.

Belongs to the CND1 (condensin subunit 1) family. Component of the condensin complex, which contains the SMC2 and SMC4 heterodimer, and three non SMC subunits that probably regulate the complex: BRN1, YCS4 and YCG1/YCS5.

Its subcellular location is the nucleus. The protein localises to the chromosome. Functionally, regulatory subunit of the condensin complex, a complex required for conversion of interphase chromatin into mitotic-like condense chromosomes. The condensin complex probably introduces positive supercoils into relaxed DNA in the presence of type I topoisomerases and converts nicked DNA into positive knotted forms in the presence of type II topoisomerases. The condensin complex probably also plays a role during interphase. The protein is Condensin complex subunit 1 (YCS4) of Saccharomyces cerevisiae (strain ATCC 204508 / S288c) (Baker's yeast).